Reading from the N-terminus, the 213-residue chain is Cytokinin riboside 5'-monophosphate phosphoribohydrolase LOG1 (213 aa).

Substrate-binding positions include E78, 96–97 (RK), 113–119 (GYGTLEE), and T125.

It belongs to the LOG family. As to expression, expressed in roots and shoots. Detected in the vascular tissues of roots, cotyledons, leaves and pistils, in the shoot apical meristem and in immature flowers.

The protein resides in the cytoplasm. The protein localises to the nucleus. It carries out the reaction N(6)-(dimethylallyl)adenosine 5'-phosphate + H2O = N(6)-dimethylallyladenine + D-ribose 5-phosphate. It catalyses the reaction 9-ribosyl-trans-zeatin 5'-phosphate + H2O = trans-zeatin + D-ribose 5-phosphate. Its function is as follows. Cytokinin-activating enzyme working in the direct activation pathway. Phosphoribohydrolase that converts inactive cytokinin nucleotides to the biologically active free-base forms. This Arabidopsis thaliana (Mouse-ear cress) protein is Cytokinin riboside 5'-monophosphate phosphoribohydrolase LOG1 (LOG1).